We begin with the raw amino-acid sequence, 124 residues long: Fluoride-specific ion channel FluC (124 aa).

3 consecutive transmembrane segments (helical) span residues Leu5 to Gln27, Val70 to Ile90, and Trp95 to Leu115. 2 residues coordinate Na(+): Gly74 and Thr77.

The protein belongs to the fluoride channel Fluc/FEX (TC 1.A.43) family.

The protein localises to the cell inner membrane. It carries out the reaction fluoride(in) = fluoride(out). Its activity is regulated as follows. Na(+) is not transported, but it plays an essential structural role and its presence is essential for fluoride channel function. In terms of biological role, fluoride-specific ion channel. Important for reducing fluoride concentration in the cell, thus reducing its toxicity. The chain is Fluoride-specific ion channel FluC from Shewanella sediminis (strain HAW-EB3).